The following is a 948-amino-acid chain: Putative helicase 009L (948 aa).

The Helicase ATP-binding domain maps to leucine 64–glutamine 243. Histidine 77–threonine 84 is a binding site for ATP. The DEAH box signature appears at aspartate 187–histidine 190. The region spanning valine 371 to alanine 554 is the Helicase C-terminal domain.

The protein is Putative helicase 009L of Frog virus 3 (isolate Goorha) (FV-3).